A 705-amino-acid polypeptide reads, in one-letter code: Translation initiation factor IF-2 (705 aa).

The disordered stretch occupies residues 40–124 (DDQIKALDKK…QPAAPKEIPS (85 aa)). Residues 41 to 58 (DQIKALDKKFKKEQKNDN) show a composition bias toward basic and acidic residues. A compositionally biased stretch (low complexity) spans 59–77 (KQSTQNNHQKSNNQNQNKG). Residues 94-108 (KGNKKNNRNNKKNNK) show a composition bias toward basic residues. Residues 207–376 (ERPAVVTIMG…GLVAEVQELK (170 aa)) enclose the tr-type G domain. Residues 216–223 (GHVDHGKT) are G1. 216 to 223 (GHVDHGKT) is a GTP binding site. The segment at 241–245 (GITQH) is G2. A G3 region spans residues 262-265 (DTPG). GTP is bound by residues 262-266 (DTPGH) and 316-319 (NKID). Residues 316-319 (NKID) are G4. Residues 352-354 (SAL) form a G5 region.

It belongs to the TRAFAC class translation factor GTPase superfamily. Classic translation factor GTPase family. IF-2 subfamily.

It is found in the cytoplasm. One of the essential components for the initiation of protein synthesis. Protects formylmethionyl-tRNA from spontaneous hydrolysis and promotes its binding to the 30S ribosomal subunits. Also involved in the hydrolysis of GTP during the formation of the 70S ribosomal complex. In Staphylococcus aureus (strain USA300), this protein is Translation initiation factor IF-2.